Reading from the N-terminus, the 65-residue chain is Large ribosomal subunit protein uL29 (65 aa).

Belongs to the universal ribosomal protein uL29 family.

This is Large ribosomal subunit protein uL29 from Desulforapulum autotrophicum (strain ATCC 43914 / DSM 3382 / VKM B-1955 / HRM2) (Desulfobacterium autotrophicum).